Reading from the N-terminus, the 476-residue chain is Sulfate adenylyltransferase subunit 1 (476 aa).

A tr-type G domain is found at 24-239 (KSMLRFLTCG…VLENVDIDQK (216 aa)). Residues 33–40 (GSVDDGKS) are G1. GTP is bound at residue 33 to 40 (GSVDDGKS). Residues 91–95 (GITID) are G2. Residues 112-115 (DTPG) form a G3 region. Residues 112–116 (DTPGH) and 167–170 (NKMD) contribute to the GTP site. The tract at residues 167–170 (NKMD) is G4. A G5 region spans residues 205 to 207 (SAL).

It belongs to the TRAFAC class translation factor GTPase superfamily. Classic translation factor GTPase family. CysN/NodQ subfamily. As to quaternary structure, heterodimer composed of CysD, the smaller subunit, and CysN.

The catalysed reaction is sulfate + ATP + H(+) = adenosine 5'-phosphosulfate + diphosphate. It participates in sulfur metabolism; hydrogen sulfide biosynthesis; sulfite from sulfate: step 1/3. Functionally, with CysD forms the ATP sulfurylase (ATPS) that catalyzes the adenylation of sulfate producing adenosine 5'-phosphosulfate (APS) and diphosphate, the first enzymatic step in sulfur assimilation pathway. APS synthesis involves the formation of a high-energy phosphoric-sulfuric acid anhydride bond driven by GTP hydrolysis by CysN coupled to ATP hydrolysis by CysD. The sequence is that of Sulfate adenylyltransferase subunit 1 from Vibrio atlanticus (strain LGP32) (Vibrio splendidus (strain Mel32)).